Reading from the N-terminus, the 967-residue chain is Phosphoenolpyruvate carboxylase 1 (967 aa).

The residue at position 11 (S11) is a Phosphoserine. Active-site residues include H173 and K602. S704 is subject to Phosphoserine.

This sequence belongs to the PEPCase type 1 family. As to quaternary structure, homotetramer. Requires Mg(2+) as cofactor. The cofactor is Mn(2+). Post-translationally, the phosphorylation of Ser-11 is reversibly promoted by inorganic phosphate (Pi) deprivation. Enhanced activity by phosphorylation at pH 7.3 by lowering Km and sensitivity to inhibition by L-malate and L-aspartate, while enhancing activation by glucose 6-phosphate. Expressed in all plant organs, with higher levels in roots.

It is found in the cytoplasm. The enzyme catalyses oxaloacetate + phosphate = phosphoenolpyruvate + hydrogencarbonate. By light-reversible phosphorylation. Activated by inorganic phosphate (Pi) deprivation and glucose 6-phosphate. Inhibited by L-malate and L-aspartate. Its function is as follows. Through the carboxylation of phosphoenolpyruvate (PEP) it forms oxaloacetate, a four-carbon dicarboxylic acid source for the tricarboxylic acid cycle. Contributes probably to the adaptation to inorganic phosphate (Pi) deprivation. The polypeptide is Phosphoenolpyruvate carboxylase 1 (PPC1) (Arabidopsis thaliana (Mouse-ear cress)).